A 434-amino-acid polypeptide reads, in one-letter code: V-type ATP synthase beta chain (434 aa).

Belongs to the ATPase alpha/beta chains family.

Produces ATP from ADP in the presence of a proton gradient across the membrane. The V-type beta chain is a regulatory subunit. The protein is V-type ATP synthase beta chain of Borreliella afzelii (strain PKo) (Borrelia afzelii).